The following is a 733-amino-acid chain: MKLILLYLAVVLCFVGKARSFRNGAGFYTSLGGQMRVFDFNKKTLDAKSSGGSKDYNLSDGGKSNSRKNLSPATGGSATQQSNLDDSHAPNLGKSETMLSLLGYLGAFRPVLSGLTSLPRVGGGAHGNIGLRAEISRNGVNLSGDSSARGSLNVNPLSGLSTKSGNDATVQGQQAAASGGSKHNVENSSLSTGSATSNKGADKPSEHLSNLFLKGLKGIVEPITSAAGGSVSSAVENLKAQIKKFIEPLTEDHGPTSTSASVSGDSSTSSRLDGHSSDGLSKVSGDDPTVQGHDVAASDGSKQNVEDSTLSTGSATSNEGDDKSSDNSSNTFREDLEKILEQITSAPGGSVSSAVENLKAQIKKFIEPLTEDHGPTSTSASVSGDSSTSSRLDGHSSDGLSKVSGDDPTVQGHDVAASDGSKQNVEDSTLSTGSATSNEGDDKSSDNSSNTFREDLEKILEQITSAPGGSVSTVNNPDEDRLISIIENLAGHIQQSVTEASQSAERPNAQSSNNLSGKLEPKYENPTNGSSSASSADKPYEEGMRKLLKFLEEQYGQTGTDASVSGMSSESSRSNVHLSDGFSMESGDDATVQGQQAAASGGPKQNVESSNSSTGSATSNGGGDSNEVRGPSSSAVDSTDSGDRGNLADKQGPGFNGPEGVGENNGGSFRAGSLDTGSKSDSGSHNLSSGSGSRSNVSTGGEPSDKNEPADPGVSGRVTCPTGKTQSGSPSVA.

The signal sequence occupies residues 1 to 20 (MKLILLYLAVVLCFVGKARS). A disordered region spans residues 48-91 (KSSGGSKDYNLSDGGKSNSRKNLSPATGGSATQQSNLDDSHAPN). A glycan (N-linked (GlcNAc...) asparagine) is linked at asparagine 57. The span at 62 to 84 (GKSNSRKNLSPATGGSATQQSNL) shows a compositional bias: polar residues. 2 N-linked (GlcNAc...) asparagine glycosylation sites follow: asparagine 141 and asparagine 187. Disordered stretches follow at residues 172 to 204 (GQQA…ADKP), 249 to 330 (LTED…NSSN), 369 to 450 (LTED…NSSN), and 496 to 733 (SVTE…PSVA). A compositionally biased stretch (polar residues) spans 186 to 199 (ENSSLSTGSATSNK). Positions 256–270 (TSTSASVSGDSSTSS) are enriched in low complexity. Polar residues predominate over residues 300 to 318 (GSKQNVEDSTLSTGSATSN). An N-linked (GlcNAc...) asparagine glycan is attached at asparagine 327. Residues 376–390 (TSTSASVSGDSSTSS) show a composition bias toward low complexity. Positions 420 to 438 (GSKQNVEDSTLSTGSATSN) are enriched in polar residues. Residues asparagine 447, asparagine 514, and asparagine 528 are each glycosylated (N-linked (GlcNAc...) asparagine). 2 stretches are compositionally biased toward polar residues: residues 496–516 (SVTE…NNLS) and 525–535 (NPTNGSSSASS). Basic and acidic residues predominate over residues 538–552 (KPYEEGMRKLLKFLE). Low complexity-rich tracts occupy residues 563–574 (SVSGMSSESSRS) and 609–619 (SSNSSTGSATS). Asparagine 611 carries N-linked (GlcNAc...) asparagine glycosylation. Gly residues predominate over residues 654–665 (GFNGPEGVGENN). Residues 677-701 (GSKSDSGSHNLSSGSGSRSNVSTGG) show a composition bias toward low complexity. N-linked (GlcNAc...) asparagine glycosylation is found at asparagine 686 and asparagine 696. Positions 722–733 (TGKTQSGSPSVA) are enriched in polar residues.

In terms of processing, N-glycosylated. As to expression, detected in terminal tubule cells of the submandibular gland (at protein level). Expressed in submandibular salivary glands of 3-day-old males but not adults. Expression in adult submandibular glands is restricted to females. Isoform 5 is expressed in both 3-day-old and adult sublingual glands.

It localises to the secreted. The sequence is that of Submandibular gland protein C (Muc19) from Mus musculus (Mouse).